The primary structure comprises 141 residues: Small ribosomal subunit protein uS9c (141 aa).

This sequence belongs to the universal ribosomal protein uS9 family.

It is found in the plastid. It localises to the chloroplast. The sequence is that of Small ribosomal subunit protein uS9c (rps9) from Tupiella akineta (Green alga).